The following is a 238-amino-acid chain: ATP synthase subunit O, mitochondrial (238 aa).

The N-terminal 36 residues, 1–36 (MANRFRSGISFFKTIAVTDSVSSVRSKSLFPALRTY), are a transit peptide targeting the mitochondrion. T90 is modified (phosphothreonine).

This sequence belongs to the ATPase delta chain family. In terms of assembly, F-type ATPases have 2 components, CF(1) - the catalytic core - and CF(0) - the membrane proton channel. CF(1) has five subunits: alpha(3), beta(3), gamma(1), delta(1), epsilon(1). CF(0) has three main subunits: a, b and c.

The protein localises to the mitochondrion. Its subcellular location is the mitochondrion inner membrane. Functionally, mitochondrial membrane ATP synthase (F(1)F(0) ATP synthase or Complex V) produces ATP from ADP in the presence of a proton gradient across the membrane which is generated by electron transport complexes of the respiratory chain. F-type ATPases consist of two structural domains, F(1) - containing the extramembraneous catalytic core and F(0) - containing the membrane proton channel, linked together by a central stalk and a peripheral stalk. During catalysis, ATP synthesis in the catalytic domain of F(1) is coupled via a rotary mechanism of the central stalk subunits to proton translocation. Part of the complex F(0) domain and the peripheric stalk, which acts as a stator to hold the catalytic alpha(3)beta(3) subcomplex and subunit a/ATP6 static relative to the rotary elements. This chain is ATP synthase subunit O, mitochondrial, found in Arabidopsis thaliana (Mouse-ear cress).